The primary structure comprises 345 residues: MATIQLLNIKKQYDNDIFVINDLNLTVADGEFLVIVGPSGCGKSTLLRIIAGLEKVTSGELYIDNELINNREPADRDIAMVFQNYALYPHMTVRGNLEYGLKNRKTPKEDINKRIAHVAKLLEIEPFLDRKPQQLSGGQRQRVAMGRVIVRKPRVFLFDEPLSNLDAKLRAHMCIEIKKLQRSLKTTSLYVTHDQLEAMTLADKMVVMNKGTIEQIGTPMEIYDCPKTIFVADFIGSPPINFLDRQALEKHLGNLFSCSKDTDILAFRPEAILLGEYPDKGPVFHTQIEFIRPIGTGCHVLTRWNDILFTVDIKERLTSDYGQKLNFTVTHQNFHTFNKKTGNRT.

Positions 4 to 235 (IQLLNIKKQY…PKTIFVADFI (232 aa)) constitute an ABC transporter domain. 37–44 (GPSGCGKS) provides a ligand contact to ATP.

The protein belongs to the ABC transporter superfamily. sn-glycerol-3-phosphate importer (TC 3.A.1.1.3) family. In terms of assembly, the complex is composed of two ATP-binding proteins (UgpC), two transmembrane proteins (UgpA and UgpE) and a solute-binding protein (UgpB).

It localises to the cell inner membrane. It carries out the reaction sn-glycerol 3-phosphate(out) + ATP + H2O = sn-glycerol 3-phosphate(in) + ADP + phosphate + H(+). Functionally, part of the ABC transporter complex UgpBAEC involved in sn-glycerol-3-phosphate (G3P) import. Responsible for energy coupling to the transport system. The polypeptide is sn-glycerol-3-phosphate import ATP-binding protein UgpC (Bartonella bacilliformis (strain ATCC 35685 / KC583 / Herrer 020/F12,63)).